The sequence spans 1687 residues: A-kinase anchor protein SPHKAP (1687 aa).

Polar residues predominate over residues M1 to E14. 2 disordered regions span residues M1–Q25 and R272–S293. Residues F914 to A931 are PKA-RII subunit binding domain. The interval L964–K989 is disordered. 8 positions are modified to phosphoserine: S1010, S1070, S1092, S1105, S1106, S1109, S1244, and S1273. Disordered regions lie at residues V1363–R1406 and D1421–T1520. Residues G1366–G1375 show a composition bias toward polar residues. The span at K1382–S1393 shows a compositional bias: basic and acidic residues. Polar residues predominate over residues T1461–R1470. The span at E1482 to R1494 shows a compositional bias: basic and acidic residues. Residues N1495–S1508 are compositionally biased toward low complexity.

It belongs to the AKAP110 family. As to quaternary structure, interacts (via the PKA-RII subunit binding domain) with the RI subunit of PKA. Interacts with SPHK1; the interaction greatly reduces SPHK1 activity.

Its subcellular location is the cytoplasm. Its function is as follows. Anchoring protein that binds preferentially to the type I regulatory subunit of c-AMP-dependent protein kinase (PKA type I) and targets it to distinct subcellular compartments. May act as a converging factor linking cAMP and sphingosine signaling pathways. Plays a regulatory role in the modulation of SPHK1. This Mus musculus (Mouse) protein is A-kinase anchor protein SPHKAP (Sphkap).